Reading from the N-terminus, the 773-residue chain is MIITKSWLNDWLELEEISSDKIAKTLNSIGIEVDRVGALKAPDKVVVGYVKEKIKHENSDKLSICQVDIGSETLQIVCGAANVDAGQFVAVATKGAIMSNGMEIKEAKLRGVDSCGMLCSSLELGFEKINEGIMLLDESIGKLELGRPLNTYEIFNDELIEVELTPNRGDCLSIYGIARDLAAALNLNLKEPKPFKESENVLGIGRILRLAAEKELNGLYNYRAIGLKEEIQTNLLLSLRLAQIEGLGKNSIENLLNYATHSTGVLFNAYDLSSFSEKDEEFTINLSKQVHGETKVSYKDKLLSFSGIFQNNESRCKDDSKIIIIEANYTDPLVIADAKIYHKDQDEKMLYRSFRGSEPKLNLGMDFLLGIFEQIPNLVIYSSSQQILTDKELPIIPISIEGISDIIGQNVDKDEVLKILKKLGFELILSGEGLINVKAPLHRPDIKNLSDICEEVVRIIGIDNIASKGLEFIEKNRLNSAYKNYIEFLNLRKRAVASGYFESLHYVLDNGEELKRLGFDSVKLKLINPITAELNTLRTTLLNHLLNAASLNAKNSKKIIKLFELGAVFNVNNQELNRIAFIHSGLKEEAKISNKAKPESVQFYDFLLDIKNIIGDFKLKSSKYNILSPYEQADIYLSDIKVGFIGRLHLKIENERDLPKTYICELDLDLIRQDFKIAKPYSKFPAITRDLSVLIPKGFEYNQIKNCIEELNLEILENFRLVDIYSDENLKEFYSITISFSFRDINKTLEDNQVNECMDKILNTLKNLGLDLR.

Residues Leu39 to Asn150 enclose the tRNA-binding domain. Residues Lys391–Ser467 form the B5 domain. Residues Asp445, Asp451, Glu454, and Glu455 each contribute to the Mg(2+) site. The FDX-ACB domain occupies Ser682–Arg773.

The protein belongs to the phenylalanyl-tRNA synthetase beta subunit family. Type 1 subfamily. Tetramer of two alpha and two beta subunits. Mg(2+) serves as cofactor.

It localises to the cytoplasm. The enzyme catalyses tRNA(Phe) + L-phenylalanine + ATP = L-phenylalanyl-tRNA(Phe) + AMP + diphosphate + H(+). In Campylobacter jejuni subsp. jejuni serotype O:2 (strain ATCC 700819 / NCTC 11168), this protein is Phenylalanine--tRNA ligase beta subunit (pheT).